The chain runs to 247 residues: 5'-nucleotidase SurE (247 aa).

A divalent metal cation-binding residues include aspartate 8, aspartate 9, serine 39, and asparagine 91.

This sequence belongs to the SurE nucleotidase family. A divalent metal cation is required as a cofactor.

The protein localises to the cytoplasm. It catalyses the reaction a ribonucleoside 5'-phosphate + H2O = a ribonucleoside + phosphate. Functionally, nucleotidase that shows phosphatase activity on nucleoside 5'-monophosphates. This Aromatoleum aromaticum (strain DSM 19018 / LMG 30748 / EbN1) (Azoarcus sp. (strain EbN1)) protein is 5'-nucleotidase SurE.